Consider the following 141-residue polypeptide: Nucleoside diphosphate kinase (141 aa).

Positions 11, 59, 87, 93, 104, and 114 each coordinate ATP. Catalysis depends on His-117, which acts as the Pros-phosphohistidine intermediate.

This sequence belongs to the NDK family. As to quaternary structure, homotetramer. The cofactor is Mg(2+).

It is found in the cytoplasm. The enzyme catalyses a 2'-deoxyribonucleoside 5'-diphosphate + ATP = a 2'-deoxyribonucleoside 5'-triphosphate + ADP. It catalyses the reaction a ribonucleoside 5'-diphosphate + ATP = a ribonucleoside 5'-triphosphate + ADP. Its function is as follows. Major role in the synthesis of nucleoside triphosphates other than ATP. The ATP gamma phosphate is transferred to the NDP beta phosphate via a ping-pong mechanism, using a phosphorylated active-site intermediate. This is Nucleoside diphosphate kinase from Photorhabdus laumondii subsp. laumondii (strain DSM 15139 / CIP 105565 / TT01) (Photorhabdus luminescens subsp. laumondii).